The chain runs to 205 residues: Holliday junction branch migration complex subunit RuvA (205 aa).

The interval 1 to 64 (MIGRLRGVLV…EDAQLLYGFI (64 aa)) is domain I. The interval 65–143 (TKQERALFRL…SLMEASAGSE (79 aa)) is domain II. A flexible linker region spans residues 144–156 (REFVLQSNYSPAP). Residues 157-205 (TVNSAEEDAISALISLGYKPPQASKSVSAAYKEGMDSETLIKAALKSML) are domain III.

The protein belongs to the RuvA family. As to quaternary structure, homotetramer. Forms an RuvA(8)-RuvB(12)-Holliday junction (HJ) complex. HJ DNA is sandwiched between 2 RuvA tetramers; dsDNA enters through RuvA and exits via RuvB. An RuvB hexamer assembles on each DNA strand where it exits the tetramer. Each RuvB hexamer is contacted by two RuvA subunits (via domain III) on 2 adjacent RuvB subunits; this complex drives branch migration. In the full resolvosome a probable DNA-RuvA(4)-RuvB(12)-RuvC(2) complex forms which resolves the HJ.

Its subcellular location is the cytoplasm. Functionally, the RuvA-RuvB-RuvC complex processes Holliday junction (HJ) DNA during genetic recombination and DNA repair, while the RuvA-RuvB complex plays an important role in the rescue of blocked DNA replication forks via replication fork reversal (RFR). RuvA specifically binds to HJ cruciform DNA, conferring on it an open structure. The RuvB hexamer acts as an ATP-dependent pump, pulling dsDNA into and through the RuvAB complex. HJ branch migration allows RuvC to scan DNA until it finds its consensus sequence, where it cleaves and resolves the cruciform DNA. This Shewanella baltica (strain OS223) protein is Holliday junction branch migration complex subunit RuvA.